Consider the following 400-residue polypeptide: Nicotinate phosphoribosyltransferase (400 aa).

H220 carries the post-translational modification Phosphohistidine; by autocatalysis.

This sequence belongs to the NAPRTase family. In terms of processing, transiently phosphorylated on a His residue during the reaction cycle. Phosphorylation strongly increases the affinity for substrates and increases the rate of nicotinate D-ribonucleotide production. Dephosphorylation regenerates the low-affinity form of the enzyme, leading to product release.

It catalyses the reaction nicotinate + 5-phospho-alpha-D-ribose 1-diphosphate + ATP + H2O = nicotinate beta-D-ribonucleotide + ADP + phosphate + diphosphate. It functions in the pathway cofactor biosynthesis; NAD(+) biosynthesis; nicotinate D-ribonucleotide from nicotinate: step 1/1. Functionally, catalyzes the synthesis of beta-nicotinate D-ribonucleotide from nicotinate and 5-phospho-D-ribose 1-phosphate at the expense of ATP. The polypeptide is Nicotinate phosphoribosyltransferase (Shigella dysenteriae serotype 1 (strain Sd197)).